Reading from the N-terminus, the 56-residue chain is ETMLDRIASGDLESSVDDPRSAEDKRFESHIEQGKPYKELRMEVGKQTLKYAQEEL.

Positions glutamate 1 to histidine 30 are disordered. Over residues aspartate 17–histidine 30 the composition is skewed to basic and acidic residues.

It belongs to the picornaviridae polyprotein family. As to quaternary structure, homopentamer. Homooligomer. In terms of assembly, interacts with capsid protein VP2. Interacts with capsid protein VP3. In terms of processing, specific enzymatic cleavages by viral protease in vivo yield a variety of precursors and mature proteins. Polyprotein processing intermediates are produced, such as P1-2A which is a functional precursor of the structural proteins, VP0 which is a VP4-VP2 precursor, VP1-2A precursor, 3ABC precursor which is a stable and catalytically active precursor of 3A, 3B and 3C proteins, 3AB and 3CD precursors. The assembly signal 2A is removed from VP1-2A by a host protease, possibly host Cathepsin L. This cleavage occurs over a region of 3 amino-acids probably generating VP1 proteins with heterogeneous C-termini. Post-translationally, the assembly signal 2A is removed from VP1-2A by a host protease, possibly host Cathepsin L in naked virions. This cleavage does not occur in enveloped virions. This cleavage occurs over a region of 3 amino-acids probably generating VP1 proteins with heterogeneous C-termini.

The protein localises to the virion. It localises to the host endosome. It is found in the host multivesicular body. Functionally, capsid proteins VP1, VP2, and VP3 form a closed capsid enclosing the viral positive strand RNA genome. All these proteins contain a beta-sheet structure called beta-barrel jelly roll. Together they form an icosahedral capsid (T=3) composed of 60 copies of each VP1, VP2, and VP3, with a diameter of approximately 300 Angstroms. VP1 is situated at the 12 fivefold axes, whereas VP2 and VP3 are located at the quasi-sixfold axes. The naked capsid interacts with the host receptor HAVCR1 to provide virion attachment to and probably entry into the target cell. In terms of biological role, precursor component of immature procapsids that corresponds to an extended form of the structural protein VP1. After maturation, possibly by the host Cathepsin L, the assembly signal 2A is cleaved to give rise to the mature VP1 protein. In Callithrix (Owl-faced monkey), this protein is Genome polyprotein.